The following is a 264-amino-acid chain: NAD kinase (264 aa).

D45 (proton acceptor) is an active-site residue. Residues 45–46 (DG), 121–122 (NE), R147, D149, A184, and Q221 contribute to the NAD(+) site.

This sequence belongs to the NAD kinase family. The cofactor is a divalent metal cation.

It localises to the cytoplasm. The catalysed reaction is NAD(+) + ATP = ADP + NADP(+) + H(+). In terms of biological role, involved in the regulation of the intracellular balance of NAD and NADP, and is a key enzyme in the biosynthesis of NADP. Catalyzes specifically the phosphorylation on 2'-hydroxyl of the adenosine moiety of NAD to yield NADP. The sequence is that of NAD kinase from Leuconostoc mesenteroides subsp. mesenteroides (strain ATCC 8293 / DSM 20343 / BCRC 11652 / CCM 1803 / JCM 6124 / NCDO 523 / NBRC 100496 / NCIMB 8023 / NCTC 12954 / NRRL B-1118 / 37Y).